The chain runs to 164 residues: UPF0114 protein YqhA (164 aa).

The next 3 membrane-spanning stretches (helical) occupy residues 15–35 (LLAP…LKFF), 53–73 (LILV…LVMV), and 136–156 (LMWY…MGYL).

Belongs to the UPF0114 family.

It is found in the cell membrane. This Salmonella agona (strain SL483) protein is UPF0114 protein YqhA.